The sequence spans 293 residues: 4-hydroxy-tetrahydrodipicolinate synthase (293 aa).

Residue Thr47 participates in pyruvate binding. Catalysis depends on Tyr135, which acts as the Proton donor/acceptor. The active-site Schiff-base intermediate with substrate is the Lys163. Val205 is a binding site for pyruvate.

The protein belongs to the DapA family. Homotetramer; dimer of dimers.

It is found in the cytoplasm. The enzyme catalyses L-aspartate 4-semialdehyde + pyruvate = (2S,4S)-4-hydroxy-2,3,4,5-tetrahydrodipicolinate + H2O + H(+). The protein operates within amino-acid biosynthesis; L-lysine biosynthesis via DAP pathway; (S)-tetrahydrodipicolinate from L-aspartate: step 3/4. Functionally, catalyzes the condensation of (S)-aspartate-beta-semialdehyde [(S)-ASA] and pyruvate to 4-hydroxy-tetrahydrodipicolinate (HTPA). In Leptothrix cholodnii (strain ATCC 51168 / LMG 8142 / SP-6) (Leptothrix discophora (strain SP-6)), this protein is 4-hydroxy-tetrahydrodipicolinate synthase.